Here is a 429-residue protein sequence, read N- to C-terminus: Asparagine--tRNA ligase (429 aa).

Belongs to the class-II aminoacyl-tRNA synthetase family.

The protein resides in the cytoplasm. The catalysed reaction is tRNA(Asn) + L-asparagine + ATP = L-asparaginyl-tRNA(Asn) + AMP + diphosphate + H(+). The chain is Asparagine--tRNA ligase from Thermoplasma acidophilum (strain ATCC 25905 / DSM 1728 / JCM 9062 / NBRC 15155 / AMRC-C165).